Reading from the N-terminus, the 250-residue chain is Triosephosphate isomerase (250 aa).

9–11 (NWK) contributes to the substrate binding site. The active-site Electrophile is His-95. Glu-167 acts as the Proton acceptor in catalysis. Substrate is bound by residues Gly-173, Ser-213, and 234–235 (GG).

This sequence belongs to the triosephosphate isomerase family. Homodimer.

It localises to the cytoplasm. The catalysed reaction is D-glyceraldehyde 3-phosphate = dihydroxyacetone phosphate. The protein operates within carbohydrate biosynthesis; gluconeogenesis. It functions in the pathway carbohydrate degradation; glycolysis; D-glyceraldehyde 3-phosphate from glycerone phosphate: step 1/1. Its function is as follows. Involved in the gluconeogenesis. Catalyzes stereospecifically the conversion of dihydroxyacetone phosphate (DHAP) to D-glyceraldehyde-3-phosphate (G3P). The chain is Triosephosphate isomerase from Chloroflexus aurantiacus (strain ATCC 29366 / DSM 635 / J-10-fl).